The primary structure comprises 1076 residues: Vacuolar membrane protease (1076 aa).

Residues 1–11 (MKCYNPSAFVP) lie on the Cytoplasmic side of the membrane. The helical transmembrane segment at 12 to 32 (MAVTLVTVVIYLGVFIPLLII) threads the bilayer. The Vacuolar segment spans residues 33 to 437 (HETVPSAPDD…TVFAVFRLRT (405 aa)). N-linked (GlcNAc...) asparagine glycans are attached at residues Asn-50, Asn-99, and Asn-156. Zn(2+) contacts are provided by His-220 and Asp-232. The active-site Proton acceptor is the Glu-266. Glu-267, Glu-292, and His-364 together coordinate Zn(2+). A helical membrane pass occupies residues 438–458 (LFAWSLTLLIASPLILFAVSY). Topologically, residues 459–491 (LLNRQEKFYFFAGSIKSKNPEDEPISLGGWRGA) are cytoplasmic. A helical transmembrane segment spans residues 492–512 (FRFPITLFITSAITFACASLI). At 513–525 (NKINPMIIYSSPY) the chain is on the vacuolar side. The chain crosses the membrane as a helical span at residues 526–546 (AVWSMSATLFFSVFWFIMAGC). Residues 547-556 (NFVRPSALQR) are Cytoplasmic-facing. Residues 557–577 (GYAFMWMFVFGWILLVVATVY) traverse the membrane as a helical segment. Over 578 to 584 (EDRFKIS) the chain is Vacuolar. The chain crosses the membrane as a helical span at residues 585–605 (GGYLFVFYEAAIFLATLIAIC). Over 606–738 (EQFALPRKST…LPIWTWLVQY (133 aa)) the chain is Cytoplasmic. Disordered stretches follow at residues 619-662 (DSQN…EETV) and 701-720 (SYDG…HPYG). Basic and acidic residues predominate over residues 621-632 (QNDHSDNQDHHH). Positions 647 to 660 (PNADDEAAEEDQEE) are enriched in acidic residues. A helical membrane pass occupies residues 739–759 (LLVGPFILVILGQVGLFLVAA). Topologically, residues 760-771 (LHQTGTDGSPLF) are vacuolar. Residues 772-792 (LPYLIVAIFSILLLLPVTPFI) traverse the membrane as a helical segment. Topologically, residues 793 to 799 (HRLTHHM) are cytoplasmic. A helical transmembrane segment spans residues 800-820 (PTFFFLVFIGTLIYNLVAFPF). Residues 821–1076 (SPNNRYKAYF…LGLAFLLAYV (256 aa)) lie on the Vacuolar side of the membrane. A glycan (N-linked (GlcNAc...) asparagine) is linked at Asn-912.

This sequence belongs to the peptidase M28 family. Requires Zn(2+) as cofactor.

It localises to the vacuole membrane. Functionally, may be involved in vacuolar sorting and osmoregulation. In Sclerotinia sclerotiorum (strain ATCC 18683 / 1980 / Ss-1) (White mold), this protein is Vacuolar membrane protease.